Consider the following 303-residue polypeptide: Cilia- and flagella-associated protein 161 (303 aa).

As to quaternary structure, microtubule inner protein component of sperm flagellar doublet microtubules.

It is found in the cytoplasm. The protein resides in the cytoskeleton. It localises to the cilium axoneme. Its subcellular location is the flagellum axoneme. Its function is as follows. Microtubule inner protein (MIP) part of the dynein-decorated doublet microtubules (DMTs) in cilia axoneme, which is required for motile cilia beating. The polypeptide is Cilia- and flagella-associated protein 161 (Mus musculus (Mouse)).